Reading from the N-terminus, the 248-residue chain is ATP synthase subunit a (248 aa).

The next 6 membrane-spanning stretches (helical) occupy residues 27-47 (FTNS…LMLV), 83-103 (FFPL…IGIV), 113-133 (LIVT…YGFS), 142-162 (LFVP…IEVI), 192-212 (FVAM…LPLG), and 215-235 (IALT…FAIL).

This sequence belongs to the ATPase A chain family. F-type ATPases have 2 components, CF(1) - the catalytic core - and CF(0) - the membrane proton channel. CF(1) has five subunits: alpha(3), beta(3), gamma(1), delta(1), epsilon(1). CF(0) has four main subunits: a, b, b' and c.

The protein localises to the cell inner membrane. In terms of biological role, key component of the proton channel; it plays a direct role in the translocation of protons across the membrane. This is ATP synthase subunit a from Rhodopseudomonas palustris (strain ATCC BAA-98 / CGA009).